An 837-amino-acid chain; its full sequence is PE-PGRS family protein PE_PGRS4 (837 aa).

Residues 4–94 (VIAAPEVIAA…GAYAAAEAAA (91 aa)) form the PE domain. Residues 811–825 (NGGKAGGTPGAGGTS) are compositionally biased toward gly residues. A disordered region spans residues 811 to 837 (NGGKAGGTPGAGGTSGLIIGENGLNGL). The span at 826–837 (GLIIGENGLNGL) shows a compositional bias: low complexity.

The protein belongs to the mycobacterial PE family. PGRS subfamily.

This Mycobacterium tuberculosis (strain ATCC 25618 / H37Rv) protein is PE-PGRS family protein PE_PGRS4.